Here is a 476-residue protein sequence, read N- to C-terminus: Aspartyl/glutamyl-tRNA(Asn/Gln) amidotransferase subunit B (476 aa).

Belongs to the GatB/GatE family. GatB subfamily. As to quaternary structure, heterotrimer of A, B and C subunits.

It carries out the reaction L-glutamyl-tRNA(Gln) + L-glutamine + ATP + H2O = L-glutaminyl-tRNA(Gln) + L-glutamate + ADP + phosphate + H(+). The catalysed reaction is L-aspartyl-tRNA(Asn) + L-glutamine + ATP + H2O = L-asparaginyl-tRNA(Asn) + L-glutamate + ADP + phosphate + 2 H(+). Its function is as follows. Allows the formation of correctly charged Asn-tRNA(Asn) or Gln-tRNA(Gln) through the transamidation of misacylated Asp-tRNA(Asn) or Glu-tRNA(Gln) in organisms which lack either or both of asparaginyl-tRNA or glutaminyl-tRNA synthetases. The reaction takes place in the presence of glutamine and ATP through an activated phospho-Asp-tRNA(Asn) or phospho-Glu-tRNA(Gln). In Clostridium botulinum (strain Eklund 17B / Type B), this protein is Aspartyl/glutamyl-tRNA(Asn/Gln) amidotransferase subunit B.